A 261-amino-acid chain; its full sequence is Acyl-[acyl-carrier-protein]--UDP-N-acetylglucosamine O-acyltransferase (261 aa).

This sequence belongs to the transferase hexapeptide repeat family. LpxA subfamily. In terms of assembly, homotrimer.

It is found in the cytoplasm. It carries out the reaction a (3R)-hydroxyacyl-[ACP] + UDP-N-acetyl-alpha-D-glucosamine = a UDP-3-O-[(3R)-3-hydroxyacyl]-N-acetyl-alpha-D-glucosamine + holo-[ACP]. It functions in the pathway glycolipid biosynthesis; lipid IV(A) biosynthesis; lipid IV(A) from (3R)-3-hydroxytetradecanoyl-[acyl-carrier-protein] and UDP-N-acetyl-alpha-D-glucosamine: step 1/6. Involved in the biosynthesis of lipid A, a phosphorylated glycolipid that anchors the lipopolysaccharide to the outer membrane of the cell. The sequence is that of Acyl-[acyl-carrier-protein]--UDP-N-acetylglucosamine O-acyltransferase from Aquifex aeolicus (strain VF5).